A 1365-amino-acid polypeptide reads, in one-letter code: Patatin-like phospholipase domain-containing protein 6 (1365 aa).

The Lumenal segment spans residues 1 to 50 (MGTSSHGLATNSSGAKVAERDGFQDVPAPGEGAAGRICGAQPVPFVPQVL). Asn11 is a glycosylation site (N-linked (GlcNAc...) asparagine). A helical membrane pass occupies residues 51 to 71 (GVMIGAGVAVVVTAVLILLVV). Residues 72 to 1365 (RRLRVPKTPA…QEPPGSATDA (1294 aa)) are Cytoplasmic-facing. 186 to 313 (VLGHFEKPLF…VRVVQIIMVR (128 aa)) provides a ligand contact to a nucleoside 3',5'-cyclic phosphate. 2 disordered regions span residues 343-427 (FPSP…RSDF) and 441-463 (QEGASGGSLAAPARTPTQEPREQ). Ser345 is modified (phosphoserine). Positions 350–367 (TRTSPVRGSKRMVSTSAT) are enriched in polar residues. Thr352 is modified (phosphothreonine). Ser353 and Ser363 each carry phosphoserine. A compositionally biased stretch (pro residues) spans 375-389 (GRPPDPTGAPLPGPT). Ser411 is modified (phosphoserine). Position 455 is a phosphothreonine (Thr455). A nucleoside 3',5'-cyclic phosphate contacts are provided by residues 502–624 (ELAK…VAAR) and 620–740 (TVAA…LSQK). The region spanning 971 to 1137 (LVLGGGGARG…INNLPADIAR (167 aa)) is the PNPLA domain. The GXGXXG signature appears at 975–980 (GGGARG). A GXSXG motif is present at residues 1002–1006 (GTSIG). Ser1004 (nucleophile) is an active-site residue. Asp1124 (proton acceptor) is an active-site residue. A DGA/G motif is present at residues 1124–1126 (DGG). The disordered stretch occupies residues 1296-1365 (SYVSDGCADG…QEPPGSATDA (70 aa)). Acidic residues predominate over residues 1303–1319 (ADGEESDCLTEYEEDAG).

Belongs to the NTE family. Post-translationally, glycosylated.

It localises to the endoplasmic reticulum membrane. The catalysed reaction is a 1-acyl-sn-glycero-3-phosphocholine + H2O = sn-glycerol 3-phosphocholine + a fatty acid + H(+). It catalyses the reaction 1-hexadecanoyl-sn-glycero-3-phosphocholine + H2O = sn-glycerol 3-phosphocholine + hexadecanoate + H(+). The enzyme catalyses 1-(9Z-octadecenoyl)-sn-glycero-3-phosphocholine + H2O = sn-glycerol 3-phosphocholine + (9Z)-octadecenoate + H(+). It carries out the reaction 1-hexadecanoylglycerol + H2O = glycerol + hexadecanoate + H(+). The catalysed reaction is 2-hexadecanoylglycerol + H2O = glycerol + hexadecanoate + H(+). It catalyses the reaction 1-(9Z-octadecenoyl)-glycerol + H2O = glycerol + (9Z)-octadecenoate + H(+). The enzyme catalyses 2-(9Z-octadecenoyl)-glycerol + H2O = glycerol + (9Z)-octadecenoate + H(+). It carries out the reaction 2-(5Z,8Z,11Z,14Z-eicosatetraenoyl)-glycerol + H2O = glycerol + (5Z,8Z,11Z,14Z)-eicosatetraenoate + H(+). The catalysed reaction is 1-hexadecanoyl-sn-glycero-3-phosphate + H2O = sn-glycerol 3-phosphate + hexadecanoate + H(+). Its activity is regulated as follows. Inhibited by a series a OPs such as mipafox (MPX), phenyl saligenin phosphate (PSP), phenyl dipentyl phosphinate (PDPP), diisopropyl fluorophosphate and paraoxon. Phospholipase B that deacylates intracellular phosphatidylcholine (PtdCho), generating glycerophosphocholine (GroPtdCho). This deacylation occurs at both sn-2 and sn-1 positions of PtdCho. Catalyzes the hydrolysis of several naturally occurring membrane-associated lipids. Hydrolyzes lysophospholipids and monoacylglycerols, preferring the 1-acyl to the 2-acyl isomer. Does not catalyze hydrolysis of di- or triacylglycerols or fatty acid amides. The chain is Patatin-like phospholipase domain-containing protein 6 (PNPLA6) from Pongo abelii (Sumatran orangutan).